We begin with the raw amino-acid sequence, 185 residues long: Ribosome-recycling factor (185 aa).

The protein belongs to the RRF family.

It localises to the cytoplasm. Functionally, responsible for the release of ribosomes from messenger RNA at the termination of protein biosynthesis. May increase the efficiency of translation by recycling ribosomes from one round of translation to another. The chain is Ribosome-recycling factor from Streptococcus pyogenes serotype M18 (strain MGAS8232).